The chain runs to 294 residues: 4-hydroxy-tetrahydrodipicolinate synthase (294 aa).

Thr-47 contacts pyruvate. Residue Tyr-135 is the Proton donor/acceptor of the active site. Lys-163 serves as the catalytic Schiff-base intermediate with substrate. Thr-205 lines the pyruvate pocket.

Belongs to the DapA family. Homotetramer; dimer of dimers.

The protein resides in the cytoplasm. The catalysed reaction is L-aspartate 4-semialdehyde + pyruvate = (2S,4S)-4-hydroxy-2,3,4,5-tetrahydrodipicolinate + H2O + H(+). It participates in amino-acid biosynthesis; L-lysine biosynthesis via DAP pathway; (S)-tetrahydrodipicolinate from L-aspartate: step 3/4. Catalyzes the condensation of (S)-aspartate-beta-semialdehyde [(S)-ASA] and pyruvate to 4-hydroxy-tetrahydrodipicolinate (HTPA). This Rickettsia peacockii (strain Rustic) protein is 4-hydroxy-tetrahydrodipicolinate synthase.